A 605-amino-acid polypeptide reads, in one-letter code: Insulin-like growth factor-binding protein complex acid labile subunit (605 aa).

An N-terminal signal peptide occupies residues 1–27; sequence MALRKGGLALALLLLSWVALGPRSLEG. An LRRNT domain is found at 32–74; it reads TPGEAEGPACPAACVCSYDDDADELSVFCSSRNLTRLPDGVPG. Intrachain disulfides connect Cys41/Cys47 and Cys45/Cys60. Asn64, Asn85, and Asn96 each carry an N-linked (GlcNAc...) asparagine glycan. 19 LRR repeats span residues 75-96, 99-120, 123-144, 147-168, 171-192, 195-216, 219-240, 243-264, 267-288, 291-312, 315-336, 339-360, 363-384, 387-408, 411-432, 435-456, 459-480, 483-504, and 507-528; these read GTQA…AFQN, SLGF…ALLG, NLCH…TFAH, ALAS…LFEG, SLWD…AFRG, SLRE…LFSG, ELRE…VFVQ, RLQK…AFLG, ALRW…TFPG, GLRV…TFKD, FLEE…SFEG, QLEV…AFLG, NVAV…VFRG, KLHS…TFTG, GLRR…SLWG, ELLE…LFQG, KLEY…ALGP, RAFW…LLAP, and RLRY…PPGL. Asn368 carries N-linked (GlcNAc...) asparagine glycosylation. N-linked (GlcNAc...) asparagine glycosylation is present at Asn515. One can recognise an LRRCT domain in the interval 536 to 605; the sequence is NPWDCGCPLK…DLSEAHFAPC (70 aa). 3 disulfides stabilise this stretch: Cys540/Cys583, Cys542/Cys605, and Cys566/Cys571. Asn580 carries an N-linked (GlcNAc...) asparagine glycan.

Forms a ternary complex with IGF1 and IGFBP3. Plasma.

It is found in the secreted. Its subcellular location is the extracellular space. Involved in protein-protein interactions that result in protein complexes, receptor-ligand binding or cell adhesion. This chain is Insulin-like growth factor-binding protein complex acid labile subunit (IGFALS), found in Homo sapiens (Human).